A 507-amino-acid chain; its full sequence is Rhamnogalacturonase A (507 aa).

The signal sequence occupies residues 1–21 (MYVSRLLLFLAPLLVKGQLSG). Cysteine 38 and cysteine 64 are disulfide-bonded. The active-site Proton donor is the aspartate 215. Residues cysteine 217 and cysteine 234 are joined by a disulfide bond. Asparagine 235 carries an N-linked (GlcNAc...) asparagine glycan. Histidine 290 is a catalytic residue. Residue asparagine 317 is glycosylated (N-linked (GlcNAc...) asparagine). Disulfide bonds link cysteine 340–cysteine 346 and cysteine 368–cysteine 377. The segment covering 462-491 (SPATSSPTATSTAISSVDPVSAATTTATSH) has biased composition (low complexity). Residues 462–507 (SPATSSPTATSTAISSVDPVSAATTTATSHGHGKSHHKHQCRAHRH) form a disordered region. Residues 492–507 (GHGKSHHKHQCRAHRH) are compositionally biased toward basic residues.

It belongs to the glycosyl hydrolase 28 family.

Its subcellular location is the secreted. The enzyme catalyses Endohydrolysis of alpha-D-GalA-(1-&gt;2)-alpha-L-Rha glycosidic bond in the rhamnogalacturonan I backbone with initial inversion of anomeric configuration releasing oligosaccharides with beta-D-GalA at the reducing end.. Its function is as follows. Pectinolytic enzymes consist of four classes of enzymes: pectine lyase, polygalacturonase, pectin methylesterase and rhamnogalacturonase. Hydrolyzes alpha-D-galacturonopyranosyl-(1,2)-alpha-L-rhamnopyranosyl linkages in the backbone of the hairy regions of pectins. Active against linseed rhamnogalacturonan. The protein is Rhamnogalacturonase A (rhgA) of Emericella nidulans (strain FGSC A4 / ATCC 38163 / CBS 112.46 / NRRL 194 / M139) (Aspergillus nidulans).